The sequence spans 486 residues: Ribosomal protein uS12 methylthiotransferase RimO (486 aa).

Residues 9 to 125 (RSVALVTLGC…LSSHLEAILH (117 aa)) enclose the MTTase N-terminal domain. Cys-18, Cys-54, Cys-88, Cys-191, Cys-195, and Cys-198 together coordinate [4Fe-4S] cluster. The 232-residue stretch at 177 to 408 (LGSGPWAPVK…RLVEELVTQR (232 aa)) folds into the Radical SAM core domain. Residues 410-482 (EERLGEVVEV…GADLLAEPLV (73 aa)) form the TRAM domain.

Belongs to the methylthiotransferase family. RimO subfamily. Requires [4Fe-4S] cluster as cofactor.

The protein resides in the cytoplasm. The catalysed reaction is L-aspartate(89)-[ribosomal protein uS12]-hydrogen + (sulfur carrier)-SH + AH2 + 2 S-adenosyl-L-methionine = 3-methylsulfanyl-L-aspartate(89)-[ribosomal protein uS12]-hydrogen + (sulfur carrier)-H + 5'-deoxyadenosine + L-methionine + A + S-adenosyl-L-homocysteine + 2 H(+). Its function is as follows. Catalyzes the methylthiolation of an aspartic acid residue of ribosomal protein uS12. The sequence is that of Ribosomal protein uS12 methylthiotransferase RimO from Kineococcus radiotolerans (strain ATCC BAA-149 / DSM 14245 / SRS30216).